Consider the following 87-residue polypeptide: uncharacterized protein (87 aa).

A helical membrane pass occupies residues 29-49; sequence ILWMIIFVVIIAVIIYILISP.

The protein resides in the membrane. This is an uncharacterized protein from Methanocaldococcus jannaschii (strain ATCC 43067 / DSM 2661 / JAL-1 / JCM 10045 / NBRC 100440) (Methanococcus jannaschii).